A 333-amino-acid polypeptide reads, in one-letter code: tRNA dimethylallyltransferase (333 aa).

An ATP-binding site is contributed by 16 to 23 (GPTASGKT). A substrate-binding site is contributed by 18 to 23 (TASGKT). Interaction with substrate tRNA stretches follow at residues 41 to 44 (DSAL), 165 to 169 (QRISR), and 253 to 258 (RCVGYR).

It belongs to the IPP transferase family. In terms of assembly, monomer. Mg(2+) serves as cofactor.

It carries out the reaction adenosine(37) in tRNA + dimethylallyl diphosphate = N(6)-dimethylallyladenosine(37) in tRNA + diphosphate. Functionally, catalyzes the transfer of a dimethylallyl group onto the adenine at position 37 in tRNAs that read codons beginning with uridine, leading to the formation of N6-(dimethylallyl)adenosine (i(6)A). The protein is tRNA dimethylallyltransferase of Polaromonas sp. (strain JS666 / ATCC BAA-500).